A 429-amino-acid chain; its full sequence is E3 ubiquitin-protein ligase ZNRF4 (429 aa).

The first 27 residues, 1-27, serve as a signal peptide directing secretion; it reads MPLCRPEHLMPRASRVPVAASLPLSHA. The Lumenal portion of the chain corresponds to 28 to 250; that stretch reads VIPTQLPSRP…PPCHDLGCHP (223 aa). A disordered region spans residues 30 to 67; it reads PTQLPSRPGHRPPGRPRRCPKASCLPPPVGPSSTQTAK. Positions 37 to 49 are enriched in basic residues; sequence PGHRPPGRPRRCP. N-linked (GlcNAc...) asparagine glycosylation is found at N107, N152, and N229. Residues 151–223 form the PA domain; the sequence is GNRSLGAIVL…VSEAASQDLR (73 aa). Residues 251-271 form a helical membrane-spanning segment; sequence VLTVSWVLGCTLALVVSAFFV. Residues 272–429 lie on the Cytoplasmic side of the membrane; sequence LNHLWLWAQA…SSAPPEAPGQ (158 aa). The RING-type; atypical zinc finger occupies 309–352; that stretch reads CAICLDEYEEGDQLKILPCSHTYHCKCIDPWFSQAPRRSCPVCK.

Interacts with CANX.

The protein resides in the endoplasmic reticulum membrane. The catalysed reaction is S-ubiquitinyl-[E2 ubiquitin-conjugating enzyme]-L-cysteine + [acceptor protein]-L-lysine = [E2 ubiquitin-conjugating enzyme]-L-cysteine + N(6)-ubiquitinyl-[acceptor protein]-L-lysine.. It functions in the pathway protein modification; protein ubiquitination. Its function is as follows. E3 ubiquitin-protein ligase that acts as a negative regulator of NOD2 signaling by mediating ubiquitination and degradation of RIPK2. Also catalyzes ubiquitination and proteasomal degradation of CANX within the endoplasmic reticulum. Could have a role in spermatogenesis. In Homo sapiens (Human), this protein is E3 ubiquitin-protein ligase ZNRF4.